The following is a 414-amino-acid chain: Putative ankyrin repeat protein BB_B28 (414 aa).

ANK repeat units lie at residues 326 to 355 and 359 to 389; these read NGNP…NINL and NSQT…NPNI.

The protein is Putative ankyrin repeat protein BB_B28 of Borreliella burgdorferi (strain ATCC 35210 / DSM 4680 / CIP 102532 / B31) (Borrelia burgdorferi).